Consider the following 149-residue polypeptide: MKCPFCSHPETQVVETRVAEDGDFVRRRRQCGACDKRFTTYERPEVSFPNVVKKDGRRIEYDRSKLIGSFSIALRKRPVSTTQIDSAIERIEEKLLNLGQREVLSSRIGELVMRELKKLDKVAYIRFASVYRNFEDIDEFRALVDEVRK.

The segment at 3–34 (CPFCSHPETQVVETRVAEDGDFVRRRRQCGAC) is a zinc-finger region. Positions 49–139 (PNVVKKDGRR…VYRNFEDIDE (91 aa)) constitute an ATP-cone domain.

Belongs to the NrdR family. Requires Zn(2+) as cofactor.

Functionally, negatively regulates transcription of bacterial ribonucleotide reductase nrd genes and operons by binding to NrdR-boxes. The polypeptide is Transcriptional repressor NrdR (Paracidovorax citrulli (strain AAC00-1) (Acidovorax citrulli)).